A 145-amino-acid polypeptide reads, in one-letter code: 3-hydroxyacyl-[acyl-carrier-protein] dehydratase FabZ (145 aa).

The active site involves histidine 48.

The protein belongs to the thioester dehydratase family. FabZ subfamily.

It is found in the cytoplasm. The enzyme catalyses a (3R)-hydroxyacyl-[ACP] = a (2E)-enoyl-[ACP] + H2O. Functionally, involved in unsaturated fatty acids biosynthesis. Catalyzes the dehydration of short chain beta-hydroxyacyl-ACPs and long chain saturated and unsaturated beta-hydroxyacyl-ACPs. The sequence is that of 3-hydroxyacyl-[acyl-carrier-protein] dehydratase FabZ from Geobacillus sp. (strain WCH70).